A 123-amino-acid chain; its full sequence is Small ribosomal subunit protein uS12 (123 aa).

A compositionally biased stretch (basic residues) spans 10–20; sequence KGRKKVKKKKT. Positions 10–32 are disordered; sequence KGRKKVKKKKTAPALQGSPQKRG. The residue at position 89 (Asp89) is a 3-methylthioaspartic acid.

It belongs to the universal ribosomal protein uS12 family. In terms of assembly, part of the 30S ribosomal subunit. Contacts proteins S8 and S17. May interact with IF1 in the 30S initiation complex.

Functionally, with S4 and S5 plays an important role in translational accuracy. Interacts with and stabilizes bases of the 16S rRNA that are involved in tRNA selection in the A site and with the mRNA backbone. Located at the interface of the 30S and 50S subunits, it traverses the body of the 30S subunit contacting proteins on the other side and probably holding the rRNA structure together. The combined cluster of proteins S8, S12 and S17 appears to hold together the shoulder and platform of the 30S subunit. The polypeptide is Small ribosomal subunit protein uS12 (Halothermothrix orenii (strain H 168 / OCM 544 / DSM 9562)).